A 259-amino-acid polypeptide reads, in one-letter code: UPF0246 protein PST_1170 (259 aa).

This sequence belongs to the UPF0246 family.

This Stutzerimonas stutzeri (strain A1501) (Pseudomonas stutzeri) protein is UPF0246 protein PST_1170.